The following is a 66-amino-acid chain: Large ribosomal subunit protein bL35 (66 aa).

Composition is skewed to basic residues over residues 1–26 (MPKM…KRSH) and 38–48 (QKQKRKLRKSA). The interval 1–48 (MPKMKTHKGAAKRFKKTGSGKLKRSHAFTSHLFANKSQKQKRKLRKSA) is disordered.

This sequence belongs to the bacterial ribosomal protein bL35 family.

This Halalkalibacterium halodurans (strain ATCC BAA-125 / DSM 18197 / FERM 7344 / JCM 9153 / C-125) (Bacillus halodurans) protein is Large ribosomal subunit protein bL35.